The chain runs to 452 residues: 1,4-beta-D-glucan cellobiohydrolase A (452 aa).

Positions 1–17 (MHQRALLFSALLTAVRA) are cleaved as a signal peptide. N-linked (GlcNAc...) asparagine glycosylation occurs at Asn62. Catalysis depends on Glu227, which acts as the Nucleophile. The Proton donor role is filled by Glu232. Asn285, Asn335, Asn402, and Asn445 each carry an N-linked (GlcNAc...) asparagine glycan.

Belongs to the glycosyl hydrolase 7 (cellulase C) family.

It localises to the secreted. The enzyme catalyses Hydrolysis of (1-&gt;4)-beta-D-glucosidic linkages in cellulose and cellotetraose, releasing cellobiose from the non-reducing ends of the chains.. The biological conversion of cellulose to glucose generally requires three types of hydrolytic enzymes: (1) Endoglucanases which cut internal beta-1,4-glucosidic bonds; (2) Exocellobiohydrolases that cut the disaccharide cellobiose from the non-reducing end of the cellulose polymer chain; (3) Beta-1,4-glucosidases which hydrolyze the cellobiose and other short cello-oligosaccharides to glucose. This chain is 1,4-beta-D-glucan cellobiohydrolase A (cbhA), found in Aspergillus niger.